A 102-amino-acid chain; its full sequence is uncharacterized protein (102 aa).

Transmembrane regions (helical) follow at residues 14 to 34, 35 to 55, and 76 to 96; these read IKNW…VISA, VAFT…LILI, and ILSI…HCYI.

The protein localises to the cell membrane. This is an uncharacterized protein from Methanocaldococcus jannaschii (strain ATCC 43067 / DSM 2661 / JAL-1 / JCM 10045 / NBRC 100440) (Methanococcus jannaschii).